A 165-amino-acid polypeptide reads, in one-letter code: Phosphopantetheine adenylyltransferase (165 aa).

Ser-10 provides a ligand contact to substrate. ATP contacts are provided by residues 10 to 11 (SF) and His-18. The substrate site is built by Lys-42, Thr-79, and Arg-93. Residues 94–96 (GLR), Glu-104, and 129–135 (VRPITAT) contribute to the ATP site.

This sequence belongs to the bacterial CoaD family. In terms of assembly, homohexamer. Mg(2+) serves as cofactor.

It is found in the cytoplasm. The catalysed reaction is (R)-4'-phosphopantetheine + ATP + H(+) = 3'-dephospho-CoA + diphosphate. The protein operates within cofactor biosynthesis; coenzyme A biosynthesis; CoA from (R)-pantothenate: step 4/5. Reversibly transfers an adenylyl group from ATP to 4'-phosphopantetheine, yielding dephospho-CoA (dPCoA) and pyrophosphate. In Rhodopseudomonas palustris (strain HaA2), this protein is Phosphopantetheine adenylyltransferase.